We begin with the raw amino-acid sequence, 718 residues long: Fatty acid oxidation complex subunit alpha (718 aa).

Positions 1 to 188 (MIYQGESIRV…KVGAVDAVVE (188 aa)) are enoyl-CoA hydratase/isomerase. Aspartate 295 provides a ligand contact to substrate. Residues 310–718 (TKEIKTAGVL…KSYFDTTSAK (409 aa)) form a 3-hydroxyacyl-CoA dehydrogenase region. NAD(+) is bound by residues methionine 324, aspartate 343, 400–402 (VVE), lysine 407, and serine 429. The active-site For 3-hydroxyacyl-CoA dehydrogenase activity is the histidine 450. Residue asparagine 453 coordinates NAD(+). Positions 500 and 658 each coordinate substrate.

The protein in the N-terminal section; belongs to the enoyl-CoA hydratase/isomerase family. This sequence in the C-terminal section; belongs to the 3-hydroxyacyl-CoA dehydrogenase family. Heterotetramer of two alpha chains (FadB) and two beta chains (FadA).

It catalyses the reaction a (3S)-3-hydroxyacyl-CoA + NAD(+) = a 3-oxoacyl-CoA + NADH + H(+). It carries out the reaction a (3S)-3-hydroxyacyl-CoA = a (2E)-enoyl-CoA + H2O. The catalysed reaction is a 4-saturated-(3S)-3-hydroxyacyl-CoA = a (3E)-enoyl-CoA + H2O. The enzyme catalyses (3S)-3-hydroxybutanoyl-CoA = (3R)-3-hydroxybutanoyl-CoA. It catalyses the reaction a (3Z)-enoyl-CoA = a 4-saturated (2E)-enoyl-CoA. It carries out the reaction a (3E)-enoyl-CoA = a 4-saturated (2E)-enoyl-CoA. It functions in the pathway lipid metabolism; fatty acid beta-oxidation. Its function is as follows. Involved in the aerobic and anaerobic degradation of long-chain fatty acids via beta-oxidation cycle. Catalyzes the formation of 3-oxoacyl-CoA from enoyl-CoA via L-3-hydroxyacyl-CoA. It can also use D-3-hydroxyacyl-CoA and cis-3-enoyl-CoA as substrate. This chain is Fatty acid oxidation complex subunit alpha, found in Idiomarina loihiensis (strain ATCC BAA-735 / DSM 15497 / L2-TR).